Reading from the N-terminus, the 148-residue chain is F420H(2)-dependent quinone reductase MT1609 (148 aa).

Residues 46-48 (AKT), 52-57 (RKTPLM), 68-71 (VASL), 79-83 (VWYHN), and Y125 contribute to the coenzyme F420-(gamma-Glu)n site.

The protein belongs to the F420H(2)-dependent quinone reductase family.

It localises to the cell membrane. It carries out the reaction oxidized coenzyme F420-(gamma-L-Glu)(n) + a quinol + H(+) = reduced coenzyme F420-(gamma-L-Glu)(n) + a quinone. Involved in a F420-dependent anti-oxidant mechanism that protects M.tuberculosis against oxidative stress and bactericidal agents. Catalyzes the F420H(2)-dependent two-electron reduction of quinones to dihydroquinones, thereby preventing the formation of cytotoxic semiquinones obtained by the one-electron reduction pathway. In vitro, catalyzes the reduction of menadione to menadiol; since menaquinone is the sole quinone electron carrier in the respiratory chain in M.tuberculosis, the physiological electron acceptor for Fqr-mediated F420H(2) oxidation is therefore likely to be the endogenous menaquinone found in the membrane fraction of M.tuberculosis. The sequence is that of F420H(2)-dependent quinone reductase MT1609 from Mycobacterium tuberculosis (strain CDC 1551 / Oshkosh).